A 150-amino-acid polypeptide reads, in one-letter code: Ribosome maturation factor RimP (150 aa).

Belongs to the RimP family.

It localises to the cytoplasm. Functionally, required for maturation of 30S ribosomal subunits. The protein is Ribosome maturation factor RimP of Thermotoga maritima (strain ATCC 43589 / DSM 3109 / JCM 10099 / NBRC 100826 / MSB8).